The chain runs to 1001 residues: Phosphoenolpyruvate carboxylase (1001 aa).

Catalysis depends on residues H189 and K642.

The protein belongs to the PEPCase type 1 family. Mg(2+) is required as a cofactor.

It catalyses the reaction oxaloacetate + phosphate = phosphoenolpyruvate + hydrogencarbonate. Its function is as follows. Forms oxaloacetate, a four-carbon dicarboxylic acid source for the tricarboxylic acid cycle. This Prochlorococcus marinus (strain SARG / CCMP1375 / SS120) protein is Phosphoenolpyruvate carboxylase.